The sequence spans 173 residues: Putative 2-oxo-4-hydroxy-4-carboxy-5-ureidoimidazoline decarboxylase (173 aa).

Histidine 67 acts as the Proton donor in catalysis. Substrate is bound by residues proline 68, 84–88 (SQREQ), and 119–123 (FVLAA). The Microbody targeting signal motif lies at 171–173 (AKL).

It belongs to the OHCU decarboxylase family. As to expression, apparently not expressed.

The protein localises to the peroxisome. It catalyses the reaction 5-hydroxy-2-oxo-4-ureido-2,5-dihydro-1H-imidazole-5-carboxylate + H(+) = (S)-allantoin + CO2. It participates in purine metabolism; urate degradation; (S)-allantoin from urate: step 3/3. Catalyzes the stereoselective decarboxylation of 2-oxo-4-hydroxy-4-carboxy-5-ureidoimidazoline (OHCU) to (S)-allantoin. This is Putative 2-oxo-4-hydroxy-4-carboxy-5-ureidoimidazoline decarboxylase (URAD) from Homo sapiens (Human).